The chain runs to 196 residues: Large ribosomal subunit protein eL15 (196 aa).

Residues 156–196 are disordered; sequence HRGRAERGKTSAGRKGRGMRTRGRGTEKTRPSIRSHANQGK. Positions 167–178 are enriched in basic residues; sequence AGRKGRGMRTRG.

This sequence belongs to the eukaryotic ribosomal protein eL15 family.

The polypeptide is Large ribosomal subunit protein eL15 (Methanoregula boonei (strain DSM 21154 / JCM 14090 / 6A8)).